Here is a 118-residue protein sequence, read N- to C-terminus: Large ribosomal subunit protein bL20 (118 aa).

It belongs to the bacterial ribosomal protein bL20 family.

Functionally, binds directly to 23S ribosomal RNA and is necessary for the in vitro assembly process of the 50S ribosomal subunit. It is not involved in the protein synthesizing functions of that subunit. This Staphylococcus aureus (strain Mu3 / ATCC 700698) protein is Large ribosomal subunit protein bL20.